The following is a 569-amino-acid chain: MPPTEESKPVDPAQEKQAAEALASLKEAQQPAADESGSEDEGADGTAQEAGSGSTKKKNKKKSKKKNKDKSASTESSAEVGLTEALAQADPKSALSGLTPKQIQEFIDLNPALANELLAASGSSGTTDVMEAFKKLKIQDIITGLASSGKNRKDMASYKFWATQPVPQFDEKPAIFEEGPLKIQKVEDIPDEPIPLNLAPFRWVTMDLTDEKQMQEVEKLLYGHFVEDDEAMFRFKYSTSILKWSLMSPGWRKEWHVGIRSGDTLCAFIAAVPTEIRVRDKVIQGSEVNFLCIHKKLRGKRLAPVLIKEITRRINREGIWQAIYTGGIVLPRPVSTCRYYHRALNWQKLYEVGFSPCPSNSKPAFQVRKYALPEQTSTKGLRELQVKDLDAVHSLLERYLKRFDLTPVFNREETEHWLLHKKDSYAEQVIYSYVVEDASGKITDFFSFYLLESTVIRHPKHNSIRAAYMFYYATETAFTEPFDKGALTKRLNDLMADALILAKRHNFDVFNALSLMDNALFLEKQKFGPGDGQLHYYLFNYKANPIHGGVDKKNRLDEDNLSGVGFVMV.

A compositionally biased stretch (basic and acidic residues) spans 1 to 18 (MPPTEESKPVDPAQEKQA). The segment at 1-82 (MPPTEESKPV…STESSAEVGL (82 aa)) is disordered. Positions 55-68 (TKKKNKKKSKKKNK) are enriched in basic residues. Tetradecanoyl-CoA-binding positions include 158-161 (YKFW), 291-293 (LCI), and 299-303 (GKRLA). The active-site Proton acceptor; via carboxylate is V569.

The protein belongs to the NMT family. Monomer.

The protein localises to the cytoplasm. The enzyme catalyses N-terminal glycyl-[protein] + tetradecanoyl-CoA = N-tetradecanoylglycyl-[protein] + CoA + H(+). In terms of biological role, adds a myristoyl group to the N-terminal glycine residue of certain cellular proteins. The protein is Glycylpeptide N-tetradecanoyltransferase (gtt-1) of Neurospora crassa (strain ATCC 24698 / 74-OR23-1A / CBS 708.71 / DSM 1257 / FGSC 987).